The chain runs to 322 residues: MRRLPPVLLEDGCPRELISLIRTILAACKEISFRVGQGELSGVLGSTLDENIQGETQKKLDVLTNQLLKDILLESGYVKAIASEEEDYTVAGNPDAEYIVAFDPLDGSSNTDINSLVGTIFSVMKAPEGADPADQSIFMQPGINQVAAGYVLYGPSTILALTTGKGTRFFTLDKTHGTFLLTQDFAKIPADTNEYAINASNQRHWQPAMQNYINDLVAGDTGPRARNFNMRWIAAMVGDVHRVLSRGGLFTYPTDTKNPSQPNKLRLLYEANPMAMLVEQAGGIASTGTERIMDIQPNAIHQRVAVILGSKNEVETCLGYHK.

The Mg(2+) site is built by E84, D103, L105, and D106. Residues 106–109 (DGSS), N198, and K264 each bind substrate. Mg(2+) is bound at residue E270.

It belongs to the FBPase class 1 family. Homotetramer. The cofactor is Mg(2+).

It localises to the cytoplasm. The catalysed reaction is beta-D-fructose 1,6-bisphosphate + H2O = beta-D-fructose 6-phosphate + phosphate. It functions in the pathway carbohydrate biosynthesis; gluconeogenesis. This is Fructose-1,6-bisphosphatase class 1 1 from Pseudoalteromonas translucida (strain TAC 125).